Reading from the N-terminus, the 146-residue chain is Large ribosomal subunit protein uL15 (146 aa).

The interval 1–54 is disordered; that stretch reads MTIKLHDLRPAPGSKTPRTRVGRGEGSKGKTAGRGTKGTKARKQVPTTFEGGQM.

It belongs to the universal ribosomal protein uL15 family. As to quaternary structure, part of the 50S ribosomal subunit.

Functionally, binds to the 23S rRNA. The protein is Large ribosomal subunit protein uL15 of Mycobacterium ulcerans (strain Agy99).